The chain runs to 303 residues: D-alanine--D-alanine ligase (303 aa).

Residues 104-300 (KLMWQAVGLP…FEKLVERVLE (197 aa)) enclose the ATP-grasp domain. 132–187 (IAKLGLPVFVKPSSEGSSVGVTKVKTVEQLLPAVEEALKFDSIVLVEAFLAGKEYS) is a binding site for ATP. Mg(2+) is bound by residues Asp-254, Glu-267, and Asn-269.

It belongs to the D-alanine--D-alanine ligase family. Mg(2+) serves as cofactor. Requires Mn(2+) as cofactor.

It is found in the cytoplasm. It carries out the reaction 2 D-alanine + ATP = D-alanyl-D-alanine + ADP + phosphate + H(+). It functions in the pathway cell wall biogenesis; peptidoglycan biosynthesis. In terms of biological role, cell wall formation. This chain is D-alanine--D-alanine ligase, found in Actinobacillus pleuropneumoniae serotype 5b (strain L20).